A 103-amino-acid chain; its full sequence is Matrix Gla protein (103 aa).

The first 19 residues, 1–19, serve as a signal peptide directing secretion; that stretch reads MRSLLLLTVLAALVVAILC. 4-carboxyglutamate is present on Glu-21. Ser-22, Ser-25, and Ser-28 each carry phosphoserine. The Gla domain maps to 51–97; the sequence is MAKAQERVREQRKPAYELNREACDDYKLCERYAMVYGYNAAYNRYFR. Glu-56, Glu-60, Glu-67, and Glu-71 each carry 4-carboxyglutamate. Cys-73 and Cys-79 are joined by a disulfide.

It belongs to the osteocalcin/matrix Gla protein family. In terms of processing, requires vitamin K-dependent gamma-carboxylation for its function.

The protein resides in the secreted. Functionally, associates with the organic matrix of bone and cartilage. Thought to act as an inhibitor of bone formation. The sequence is that of Matrix Gla protein (MGP) from Oryctolagus cuniculus (Rabbit).